Consider the following 163-residue polypeptide: Large ribosomal subunit protein uL10 (163 aa).

Belongs to the universal ribosomal protein uL10 family. As to quaternary structure, part of the ribosomal stalk of the 50S ribosomal subunit. The N-terminus interacts with L11 and the large rRNA to form the base of the stalk. The C-terminus forms an elongated spine to which L12 dimers bind in a sequential fashion forming a multimeric L10(L12)X complex.

Functionally, forms part of the ribosomal stalk, playing a central role in the interaction of the ribosome with GTP-bound translation factors. This chain is Large ribosomal subunit protein uL10, found in Histophilus somni (strain 2336) (Haemophilus somnus).